The sequence spans 389 residues: Cytochrome b (389 aa).

Helical transmembrane passes span 32 to 52, 76 to 98, 113 to 133, 179 to 199, 225 to 245, 290 to 310, 325 to 345, and 353 to 373; these read FGFF…LLAM, WLLR…IHML, LWVS…LGYV, FFSL…LHII, FTIK…TFVF, LGVL…FLTI, LFWS…QPAA, and LYST…IYIV. Residues His-82 and His-96 each contribute to the heme b site. The heme b site is built by His-183 and His-197.

Belongs to the cytochrome b family. As to quaternary structure, the main subunits of complex b-c1 are: cytochrome b, cytochrome c1 and the Rieske protein. Heme b is required as a cofactor.

The protein localises to the mitochondrion inner membrane. Its function is as follows. Component of the ubiquinol-cytochrome c reductase complex (complex III or cytochrome b-c1 complex) that is part of the mitochondrial respiratory chain. The b-c1 complex mediates electron transfer from ubiquinol to cytochrome c. Contributes to the generation of a proton gradient across the mitochondrial membrane that is then used for ATP synthesis. This Dictyostelium discoideum (Social amoeba) protein is Cytochrome b (cytB).